The primary structure comprises 230 residues: Ureidoacrylate amidohydrolase RutB (230 aa).

The Proton acceptor role is filled by Asp24. Lys133 is a catalytic residue. The Nucleophile role is filled by Cys166.

It belongs to the isochorismatase family. RutB subfamily.

It catalyses the reaction (Z)-3-ureidoacrylate + H2O + H(+) = (Z)-3-aminoacrylate + NH4(+) + CO2. The catalysed reaction is (Z)-3-ureidoacrylate + H2O = (Z)-3-aminoacrylate + carbamate + H(+). It carries out the reaction (Z)-2-methylureidoacrylate + H2O + H(+) = (Z)-2-methylaminoacrylate + NH4(+) + CO2. Functionally, hydrolyzes ureidoacrylate to form aminoacrylate and carbamate. The carbamate hydrolyzes spontaneously, thereby releasing one of the nitrogen atoms of the pyrimidine ring as ammonia and one of its carbon atoms as CO2. This is Ureidoacrylate amidohydrolase RutB from Escherichia coli (strain K12 / MC4100 / BW2952).